A 215-amino-acid polypeptide reads, in one-letter code: Probable maleylacetoacetate isomerase (215 aa).

The GST N-terminal domain maps to 2–85; the sequence is MSLILYGYWR…YLDETYPAPR (84 aa). The GST C-terminal domain occupies 90–215; that stretch reads RGAERYQVKA…AAPENQPDAC (126 aa).

It belongs to the GST superfamily. Zeta family.

It carries out the reaction 4-maleylacetoacetate = 4-fumarylacetoacetate. It functions in the pathway amino-acid degradation; L-phenylalanine degradation; acetoacetate and fumarate from L-phenylalanine: step 5/6. This Vibrio cholerae serotype O1 (strain ATCC 39315 / El Tor Inaba N16961) protein is Probable maleylacetoacetate isomerase (maiA).